Consider the following 399-residue polypeptide: Phosphoglycerate kinase (399 aa).

Substrate is bound by residues 22 to 24 (DLN), Arg37, 60 to 63 (HFGR), Arg119, and Arg152. ATP-binding positions include Lys202, Glu324, and 354 to 357 (GGDT).

The protein belongs to the phosphoglycerate kinase family. In terms of assembly, monomer.

The protein localises to the cytoplasm. The catalysed reaction is (2R)-3-phosphoglycerate + ATP = (2R)-3-phospho-glyceroyl phosphate + ADP. The protein operates within carbohydrate degradation; glycolysis; pyruvate from D-glyceraldehyde 3-phosphate: step 2/5. The chain is Phosphoglycerate kinase from Sinorhizobium medicae (strain WSM419) (Ensifer medicae).